Consider the following 21-residue polypeptide: Pedibin (21 aa).

The segment at 1–21 is disordered; that stretch reads AGEDVSHELEEKEKALANHSE.

In terms of biological role, morphogenetically active peptide. Active in foot development. The protein is Pedibin of Hydra vulgaris (Hydra).